We begin with the raw amino-acid sequence, 1096 residues long: Centrosome-associated zinc finger protein Cp190 (1096 aa).

Residues 1–209 (MGEVKSVKVD…GDSSNVKQEP (209 aa)) form an involved in microtubule and centrosome binding region. In terms of domain architecture, BTB spans 30–97 (CDLTLQFRDN…MYTGTLEFEL (68 aa)). Residues 126 to 308 (MENVNRQQRP…PQGTQTQLEH (183 aa)) are disordered. Composition is skewed to polar residues over residues 175 to 213 (RANT…TSPF) and 220 to 230 (YNNNKRPAQTS). Residues serine 197 and serine 211 each carry the phosphoserine modification. A nuclear localization region spans residues 207–271 (QEPTSPFEQL…GDNDPEYDGG (65 aa)). An involved in interaction with cliff region spans residues 210-245 (TSPFEQLRKGYNNNKRPAQTSLLSPPSKKPSLEEVK). Phosphothreonine is present on threonine 229. Serine 233 is subject to Phosphoserine. The segment covering 239–252 (PSLEEVKEFAEQQR) has biased composition (basic and acidic residues). The tract at residues 245 to 468 (KEFAEQQRMR…IAQGAENTTG (224 aa)) is centrosomal targeting M domain involved in interaction with ZIPIC. Over residues 292-305 (STSKQQSPQGTQTQ) the composition is skewed to low complexity. Phosphoserine is present on residues serine 298 and serine 319. Positions 309–390 (GSTTIILKQD…KPPANQSSAT (82 aa)) are involved in interaction with cliff. The interval 366 to 449 (NTPAAPTEKS…ANTAAAQKRR (84 aa)) is disordered. A centrosomal localization and interaction with microtubules region spans residues 385–508 (NQSSATTSPH…KETIDPALCE (124 aa)). Positions 412 to 445 (AQQKAASSQQKSGTSQTTGNQGTGANPPANTAAA) are enriched in low complexity. 2 C2H2-type zinc fingers span residues 538–561 (AECA…NEVH) and 567–590 (QQCI…KSYH). Phosphothreonine is present on threonine 603. Residues 608–625 (LGSQDEEEEAEGDEEQEP) are compositionally biased toward acidic residues. The disordered stretch occupies residues 608–630 (LGSQDEEEEAEGDEEQEPEQTGK). Phosphoserine is present on residues serine 610, serine 708, and serine 723. A disordered region spans residues 710-733 (PEAEHVKQETDEKSLAGTEEEYDD). Residues 711–723 (EAEHVKQETDEKS) show a composition bias toward basic and acidic residues. Threonine 727 is subject to Phosphothreonine. 4 positions are modified to phosphoserine: serine 745, serine 748, serine 757, and serine 760. The segment at 770–927 (LIAESEEQSN…EDSPIPHSDS (158 aa)) is disordered. Residues 777–799 (QSNKEPKSDKPRDDISEKLKELT) show a composition bias toward basic and acidic residues. Residues 802 to 812 (WTEDENDDDVD) show a composition bias toward acidic residues. Threonine 817 carries the post-translational modification Phosphothreonine. Composition is skewed to basic and acidic residues over residues 825-834 (ANKDPEPTVH), 849-861 (KGPE…KASE), 882-907 (EKMD…KEAE), and 914-927 (EFIK…HSDS). Phosphoserine occurs at positions 920, 925, and 927. The residue at position 936 (threonine 936) is a Phosphothreonine. At serine 938 the chain carries Phosphoserine. 2 stretches are compositionally biased toward basic and acidic residues: residues 960-973 (IAEA…KDIV) and 1011-1035 (AAEK…EDKP). The interval 960-1096 (IAEAEKPDQE…GVSAAAKEEL (137 aa)) is disordered. 2 positions are modified to phosphoserine: serine 1071 and serine 1074. Residues 1076–1086 (WGDDDEDEDEN) show a composition bias toward acidic residues.

In terms of assembly, homodimerizes via the N-terminal BTB domain. Component of the gypsy chromatin insulator complex, composed of Cp190, mod(mdg4) and su(Hw). The gypsy chromatin insulator complex interacts with Topors via mod(mdg4) and su(Hw). Interacts with Cp60. Interacts with inv. Interacts with Nup98. Interacts (via BTB domain) with pita (via region between the ZAD domain and the first zinc finger domain); the interaction is direct. Interacts with ZIPIC (via region between the ZAD domain and the first zinc finger domain); the interaction is direct. Interacts (via regions between the BTB domain and first zinc finger domain) with cliff (via regions flanking MADF domain 1); the interaction is probably direct. Associates (via N-terminus) with microtubules; the interaction is direct, is enhanced by dimerization and involves multiple regions within the N-terminus. Microtubule association is enriched at growing plus ends. As to expression, expressed in spermatids but not in mature spermatozoa. Localizes within the spermatids to a sheath of microtubules around the nucleus and to microtubules within the tail.

Its subcellular location is the nucleus. It localises to the cytoplasm. The protein localises to the cytoskeleton. It is found in the microtubule organizing center. The protein resides in the centrosome. Its subcellular location is the chromosome. It localises to the nucleoplasm. Plays a central role in chromatin domain organization and boundary function through recruitment by a range of insulator DNA-binding proteins, including ZIPIC, pita, CTCF, su(Hw), cliff and others. Together with pita and CTCF cooperatively binds to and regulates the activity of the Miscadastral pigmentation (MCP) insulator. Cooperatively recruited to the front-ultraabdominal (Fub) boundary by pita, su(Hw) and cliff. Recruitment of Cp190 together with Chro/chromator induces chromatin decondensation. Component of the gypsy chromatin insulator complex which is required for the function of the gypsy chromatin insulator and other endogenous chromatin insulators. Chromatin insulators are regulatory elements that establish independent domains of transcriptional activity within eukaryotic genomes. Insulators have two defining properties; they can block the communication between an enhancer and a promoter when placed between them and can also buffer transgenes from position effect variegation (PEV). Insulators are proposed to structure the chromatin fiber into independent domains of differing transcriptional potential by promoting the formation of distinct chromatin loops to form topologically associating domains (TADs). This chromatin looping may involve the formation of insulator bodies, where homotypic interactions between individual subunits of the insulator complex could promote the clustering of widely spaced insulators at the nuclear periphery. Within the gypsy insulator complex, this protein may directly bind to insulator DNA at sites distinct from those recognized by su(Hw). Required during embryogenesis for axial expansion, an actin/myosin dependent process that distributes the dividing nuclei along the anterior-posterior axis of the syncytial embryo. Associates with centrosomes and interphase microtubules during mitosis, and recruits CP60; may have a role in maintaining centrosome and spindle integrity. The sequence is that of Centrosome-associated zinc finger protein Cp190 from Drosophila melanogaster (Fruit fly).